A 327-amino-acid polypeptide reads, in one-letter code: Methionyl-tRNA formyltransferase (327 aa).

121 to 124 (SLLP) contributes to the (6S)-5,6,7,8-tetrahydrofolate binding site.

The protein belongs to the Fmt family.

The enzyme catalyses L-methionyl-tRNA(fMet) + (6R)-10-formyltetrahydrofolate = N-formyl-L-methionyl-tRNA(fMet) + (6S)-5,6,7,8-tetrahydrofolate + H(+). Attaches a formyl group to the free amino group of methionyl-tRNA(fMet). The formyl group appears to play a dual role in the initiator identity of N-formylmethionyl-tRNA by promoting its recognition by IF2 and preventing the misappropriation of this tRNA by the elongation apparatus. The sequence is that of Methionyl-tRNA formyltransferase from Burkholderia mallei (strain ATCC 23344).